Reading from the N-terminus, the 149-residue chain is GATA transcription factor 15 (149 aa).

Positions 1–10 (MLDPTEKVID) are enriched in basic and acidic residues. 2 disordered regions span residues 1-41 (MLDP…NEKK) and 76-102 (RRTL…GDSL). The GATA-type zinc finger occupies 37–91 (SNEKKSCAICGTSKTPLWRGGPAGPKSLCNACGIRNRKKRRTLISNRSEDKKKKS).

This sequence belongs to the type IV zinc-finger family. Class B subfamily.

Its subcellular location is the nucleus. Transcriptional regulator that specifically binds 5'-GATA-3' or 5'-GAT-3' motifs within gene promoters. The sequence is that of GATA transcription factor 15 (GATA15) from Arabidopsis thaliana (Mouse-ear cress).